A 440-amino-acid chain; its full sequence is Virion host shutoff protein (440 aa).

Disordered stretches follow at residues 98 to 144 and 265 to 312; these read NIDH…RRKT and IDEP…AGPG. Residues 266–281 are compositionally biased toward low complexity; sequence DEPPAASEESSASDQQ.

It belongs to the herpesviridae VHS protein family.

It is found in the virion. In terms of biological role, minor structural protein that acts as an endoribonuclease during lytic infection. Degrades host mRNAs in the cytoplasm by cutting them at preferred sites, including some in regions of translation initiation. This is Virion host shutoff protein (UL41) from Amazona oratrix (yellow-headed parrot).